A 110-amino-acid chain; its full sequence is uncharacterized protein (110 aa).

Helical transmembrane passes span 6 to 26 (VSLYILCFALGLRNTFLIYNV) and 38 to 58 (TSGPIGDTIFLIYGIIIIIGP).

Its subcellular location is the membrane. This is an uncharacterized protein from Saccharomyces cerevisiae (strain ATCC 204508 / S288c) (Baker's yeast).